A 198-amino-acid chain; its full sequence is Holliday junction resolvase RecU (198 aa).

Positions 1–29 (MIRYPNGKSYQPKTAASSLQKKPSYSNRG) are disordered. Residues 8 to 29 (KSYQPKTAASSLQKKPSYSNRG) are compositionally biased toward polar residues. The Mg(2+) site is built by Thr83, Asp85, Glu98, and Gln117.

This sequence belongs to the RecU family. Mg(2+) serves as cofactor.

Its subcellular location is the cytoplasm. It catalyses the reaction Endonucleolytic cleavage at a junction such as a reciprocal single-stranded crossover between two homologous DNA duplexes (Holliday junction).. Its function is as follows. Endonuclease that resolves Holliday junction intermediates in genetic recombination. Cleaves mobile four-strand junctions by introducing symmetrical nicks in paired strands. Promotes annealing of linear ssDNA with homologous dsDNA. Required for DNA repair, homologous recombination and chromosome segregation. This Bacillus licheniformis (strain ATCC 14580 / DSM 13 / JCM 2505 / CCUG 7422 / NBRC 12200 / NCIMB 9375 / NCTC 10341 / NRRL NRS-1264 / Gibson 46) protein is Holliday junction resolvase RecU.